Here is a 281-residue protein sequence, read N- to C-terminus: NADPH-dependent 7-cyano-7-deazaguanine reductase (281 aa).

V87–S89 contacts substrate. Position 89–90 (S89–K90) interacts with NADPH. The Thioimide intermediate role is filled by C188. The active-site Proton donor is the D195. H227 to E228 contacts substrate. Residue R256–G257 coordinates NADPH.

The protein belongs to the GTP cyclohydrolase I family. QueF type 2 subfamily. Homodimer.

The protein localises to the cytoplasm. The enzyme catalyses 7-aminomethyl-7-carbaguanine + 2 NADP(+) = 7-cyano-7-deazaguanine + 2 NADPH + 3 H(+). Its pathway is tRNA modification; tRNA-queuosine biosynthesis. Catalyzes the NADPH-dependent reduction of 7-cyano-7-deazaguanine (preQ0) to 7-aminomethyl-7-deazaguanine (preQ1). This chain is NADPH-dependent 7-cyano-7-deazaguanine reductase, found in Aliivibrio salmonicida (strain LFI1238) (Vibrio salmonicida (strain LFI1238)).